The primary structure comprises 509 residues: ATP synthase subunit alpha (509 aa).

169–176 (GDRQTGKT) serves as a coordination point for ATP.

The protein belongs to the ATPase alpha/beta chains family. In terms of assembly, F-type ATPases have 2 components, CF(1) - the catalytic core - and CF(0) - the membrane proton channel. CF(1) has five subunits: alpha(3), beta(3), gamma(1), delta(1), epsilon(1). CF(0) has three main subunits: a(1), b(2) and c(9-12). The alpha and beta chains form an alternating ring which encloses part of the gamma chain. CF(1) is attached to CF(0) by a central stalk formed by the gamma and epsilon chains, while a peripheral stalk is formed by the delta and b chains.

It is found in the cell inner membrane. It carries out the reaction ATP + H2O + 4 H(+)(in) = ADP + phosphate + 5 H(+)(out). In terms of biological role, produces ATP from ADP in the presence of a proton gradient across the membrane. The alpha chain is a regulatory subunit. This is ATP synthase subunit alpha from Methylorubrum populi (strain ATCC BAA-705 / NCIMB 13946 / BJ001) (Methylobacterium populi).